Consider the following 389-residue polypeptide: Probable serine/threonine-protein kinase PBL11 (389 aa).

Glycine 2 carries the N-myristoyl glycine lipid modification. Cysteine 4 carries the S-palmitoyl cysteine lipid modification. In terms of domain architecture, Protein kinase spans 68–353 (FRPDSVVGEG…NEIVKTMEEL (286 aa)). ATP contacts are provided by residues 74-82 (VGEGGFGCV) and lysine 106. Position 151 is a phosphotyrosine (tyrosine 151). Aspartate 203 serves as the catalytic Proton acceptor. 2 positions are modified to phosphoserine: serine 207 and serine 237. A phosphothreonine mark is found at threonine 238 and threonine 243. The residue at position 251 (tyrosine 251) is a Phosphotyrosine.

It belongs to the protein kinase superfamily. Ser/Thr protein kinase family. As to expression, roots, leaves and stems.

It is found in the cell membrane. It carries out the reaction L-seryl-[protein] + ATP = O-phospho-L-seryl-[protein] + ADP + H(+). The catalysed reaction is L-threonyl-[protein] + ATP = O-phospho-L-threonyl-[protein] + ADP + H(+). May play a role in the regulation of plant growth and development. May be involved in plant defense signaling. This Arabidopsis thaliana (Mouse-ear cress) protein is Probable serine/threonine-protein kinase PBL11.